A 431-amino-acid polypeptide reads, in one-letter code: CCA tRNA nucleotidyltransferase 1, mitochondrial (431 aa).

The N-terminal 31 residues, 1-31, are a transit peptide targeting the mitochondrion; the sequence is MWAKLFLRPSFVNRVHLTWSCRALLTMQLKT. Positions 61 and 64 each coordinate ATP. Positions 61 and 64 each coordinate CTP. Mg(2+)-binding residues include D74 and D76. The ATP site is built by R148, D191, R194, R197, and R200. Residues R148, D191, R194, R197, and R200 each coordinate CTP.

It belongs to the tRNA nucleotidyltransferase/poly(A) polymerase family. Monomer, and homodimer. It depends on Mg(2+) as a cofactor. As to expression, expressed ubiquitously during early embryogenesis.

The protein resides in the mitochondrion. The protein localises to the cytoplasm. It localises to the nucleus. The catalysed reaction is a tRNA precursor + 2 CTP + ATP = a tRNA with a 3' CCA end + 3 diphosphate. It carries out the reaction a tRNA with a 3' CCA end + 2 CTP + ATP = a tRNA with a 3' CCACCA end + 3 diphosphate. Nucleotidyltransferase that catalyzes the addition and repair of the essential 3'-terminal CCA sequence in tRNAs, which is necessary for the attachment of amino acids to the 3' terminus of tRNA molecules, using CTP and ATP as substrates. tRNA 3'-terminal CCA addition is required both for tRNA processing and repair. Promotes tRNA repair and recycling downstream of the ribosome-associated quality control (RQC) pathway by mediating addition of the tRNA 3'-terminal CCA following cleavage by ankzf1 and repair by elac1. Also involved in tRNA surveillance by mediating tandem CCA addition to generate a CCACCA at the 3' terminus of unstable tRNAs and tRNA-like transcripts. While stable tRNAs receive only 3'-terminal CCA, unstable tRNAs beginning with GG are marked with CCACCA and rapidly degraded. The structural flexibility of RNA controls the choice between CCA versus CCACCA addition: following the first CCA addition cycle, nucleotide-binding to the active site triggers a clockwise screw motion, producing torque on the RNA. This ejects stable RNAs, whereas unstable RNAs are refolded while bound to the enzyme and subjected to a second CCA catalytic cycle. This is CCA tRNA nucleotidyltransferase 1, mitochondrial from Danio rerio (Zebrafish).